A 78-amino-acid polypeptide reads, in one-letter code: UPF0349 protein BLi03401/BL03152 (78 aa).

This sequence belongs to the UPF0349 family.

This chain is UPF0349 protein BLi03401/BL03152, found in Bacillus licheniformis (strain ATCC 14580 / DSM 13 / JCM 2505 / CCUG 7422 / NBRC 12200 / NCIMB 9375 / NCTC 10341 / NRRL NRS-1264 / Gibson 46).